Reading from the N-terminus, the 76-residue chain is Dermaseptin-B4 (76 aa).

An N-terminal signal peptide occupies residues 1-22 (MAFLKKSLFLVLFLGLVSLSIC). The propeptide occupies 23–43 (EEEKRENKDEIEQEDDEQSEE). A Glutamine amide modification is found at Gln73. Positions 75 to 76 (EQ) are excised as a propeptide.

It belongs to the frog skin active peptide (FSAP) family. Dermaseptin subfamily. Expressed by the skin glands.

It localises to the secreted. Its function is as follows. Potent antimicrobial peptide with potent activity against Gram-positive and Gram-negative bacteria. Probably acts by disturbing membrane functions with its amphipathic structure. Has an activity of stimulation of insulin release, which may protect the species from being eaten by predators by causing fatal hypoglycemia. Has hemolytic activity. In Phyllomedusa bicolor (Two-colored leaf frog), this protein is Dermaseptin-B4.